We begin with the raw amino-acid sequence, 162 residues long: 2-C-methyl-D-erythritol 2,4-cyclodiphosphate synthase (162 aa).

A divalent metal cation contacts are provided by Asp8 and His10. 4-CDP-2-C-methyl-D-erythritol 2-phosphate-binding positions include 8 to 10 (DVH) and 36 to 37 (HS). His44 serves as a coordination point for a divalent metal cation. 4-CDP-2-C-methyl-D-erythritol 2-phosphate is bound by residues 58 to 60 (DIG), 63 to 67 (FPDTD), 102 to 108 (AQAPKMA), 134 to 137 (TTTE), Phe141, and Arg144.

Belongs to the IspF family. Homotrimer. A divalent metal cation is required as a cofactor.

It catalyses the reaction 4-CDP-2-C-methyl-D-erythritol 2-phosphate = 2-C-methyl-D-erythritol 2,4-cyclic diphosphate + CMP. It participates in isoprenoid biosynthesis; isopentenyl diphosphate biosynthesis via DXP pathway; isopentenyl diphosphate from 1-deoxy-D-xylulose 5-phosphate: step 4/6. Functionally, involved in the biosynthesis of isopentenyl diphosphate (IPP) and dimethylallyl diphosphate (DMAPP), two major building blocks of isoprenoid compounds. Catalyzes the conversion of 4-diphosphocytidyl-2-C-methyl-D-erythritol 2-phosphate (CDP-ME2P) to 2-C-methyl-D-erythritol 2,4-cyclodiphosphate (ME-CPP) with a corresponding release of cytidine 5-monophosphate (CMP). This is 2-C-methyl-D-erythritol 2,4-cyclodiphosphate synthase from Yersinia pseudotuberculosis serotype IB (strain PB1/+).